Reading from the N-terminus, the 551-residue chain is Solute carrier family 22 member 13 (551 aa).

Residues 1 to 20 (MAQFVQVLAEIGDFGRFQIQ) lie on the Cytoplasmic side of the membrane. A helical transmembrane segment spans residues 21 to 41 (LLILLCVLNFLSPFYFFAHVF). Residues 42 to 138 (MVLDEPHHCA…LVCDRKHLKD (97 aa)) lie on the Extracellular side of the membrane. 4 N-linked (GlcNAc...) asparagine glycosylation sites follow: Asn-57, Asn-61, Asn-92, and Asn-104. A helical transmembrane segment spans residues 139 to 159 (TTQSVFMAGLLVGTLMFGPLC). Over 160 to 167 (DRIGRKAT) the chain is Cytoplasmic. Residues 168-188 (ILAQLLLFTLIGLATAFVPSF) form a helical membrane-spanning segment. At 189–195 (ELYMALR) the chain is on the extracellular side. The chain crosses the membrane as a helical span at residues 196–216 (FAVATAVAGLSFSNVTLLTEW). Residues 217–224 (VGPSWRTQ) are Cytoplasmic-facing. A helical membrane pass occupies residues 225 to 245 (AVVLAQCNFSLGQMVLAGLAY). The Extracellular segment spans residues 246 to 251 (GFRNWR). A helical membrane pass occupies residues 252–272 (LLQITGTAPGLLLFFYFWALP). Residues 273-332 (ESARWLLTRGRMDEAIQLIQKAASVNRRKLSPELMNQLVPEKTGPSGNALDLFRHPQLRK) lie on the Cytoplasmic side of the membrane. The helical transmembrane segment at 333–353 (VTLIIFCVWFVDSLGYYGLSL) threads the bilayer. A topological domain (extracellular) is located at residue Gln-354. The helical transmembrane segment at 355–375 (VGDFGLDVYLTQLIFGAVEVP) threads the bilayer. At 376–397 (ARCSSIFMMQRFGRKWSQLGTL) the chain is on the cytoplasmic side. The chain crosses the membrane as a helical span at residues 398–418 (VLGGLMCIIIIFIPADLPVVV). Residues 419 to 427 (TMLAVVGKM) are Extracellular-facing. The helical transmembrane segment at 428–448 (ATAAAFTISYVYSAELFPTIL) threads the bilayer. At 449–452 (RQTG) the chain is on the cytoplasmic side. The chain crosses the membrane as a helical span at residues 453–473 (MGLVGIFSRIGGILTPLVILL). Topologically, residues 474–478 (GEYHA) are extracellular. A helical membrane pass occupies residues 479–499 (ALPMLIYGSLPIVAGLLCTLL). Topologically, residues 500–551 (PETHGQGLKDTLQDLELGPHPRSPKSVPSEKETEAKGRTSSPGVAFVSSTYF) are cytoplasmic. The disordered stretch occupies residues 511–551 (LQDLELGPHPRSPKSVPSEKETEAKGRTSSPGVAFVSSTYF). Basic and acidic residues predominate over residues 527 to 536 (PSEKETEAKG). Residues 537 to 551 (RTSSPGVAFVSSTYF) show a composition bias toward polar residues.

Belongs to the major facilitator (TC 2.A.1) superfamily. Organic cation transporter (TC 2.A.1.19) family. Glycosylated. In terms of tissue distribution, ubiquitous. Highly expressed in kidneys and to a weaker extent in brain, heart, and intestine. In kidneys, expressed in proximal convoluted tubule. In kidneys, also expressed in cortical collecting duct, whereas glomerulus and thick ascending limb exhibit no expression.

The protein localises to the apical cell membrane. The catalysed reaction is urate(out) + (S)-lactate(in) = urate(in) + (S)-lactate(out). It carries out the reaction urate(out) + succinate(in) = urate(in) + succinate(out). It catalyses the reaction urate(out) + glutathione(in) = urate(in) + glutathione(out). The enzyme catalyses nicotinate(in) + urate(out) = nicotinate(out) + urate(in). The catalysed reaction is orotate(out) + a carboxylate(in) = orotate(in) + a carboxylate(out). Its function is as follows. Anion antiporter that mediates the transport of urate, orotate and nicotinate in exchange for organic or inorganic anions. Translocates urate and orotate across the apical membrane of proximal tubule epithelial cells and involved in urate renal reabsorption. Possibly involved in orotate renal reabsorption and nicotinate intestinal reabsorption. Mediates urate uptake by an exchange with organic anions such as (S)-lactate, succinate, glutathione and nicotinate. Urate and orotate transports are Cl(-)-dependent. Shows similar transport characteristics as the urate/orotate renal antiporter SLC22A12/URAT1 and may act as a compensator of SLC22A12/URAT1 in certain conditions. The protein is Solute carrier family 22 member 13 of Homo sapiens (Human).